A 389-amino-acid polypeptide reads, in one-letter code: MVTVEEVRKAQRAEGPATILAIGTATPANCILQSEYPDYYFRITNSEHKTELKEKFKRMCDKSMIRKRYMHLTEEILKENPNLCAYEAPSLDARQDMVVVEVPKLGKEAATKAIKEWGQPKSKITHVVFCTTSGVDMPGADYQLTKLLGLRPSVKRLMMYQQGCFAGGTVLRVAKDLAENNKGARVLVVCSEITAVTFRGPNDTHLDSLVGQALFGDGSAALIIGADPTPEIEKPIFELVSAAQTILPDSDGAIDGHLREVGLTFHLLKDVPGLISKNIEKSLVEAFKPLGISDWNSLFWIAHPGGPAILDQVESKLALKPEKLRATRHVLGEYGNMSSACVLFILDEMRRKCAEDGLKTTGEGLEWGVLFGFGPGLTVETVVLHSVGI.

Residue Cys164 is part of the active site.

This sequence belongs to the thiolase-like superfamily. Chalcone/stilbene synthases family.

It is found in the cytoplasm. It carries out the reaction (E)-4-coumaroyl-CoA + 3 malonyl-CoA + 3 H(+) = 2',4,4',6'-tetrahydroxychalcone + 3 CO2 + 4 CoA. Its pathway is secondary metabolite biosynthesis; flavonoid biosynthesis. Involved in the biosynthesis of prenylated phenolics natural products which contribute to the bitter taste of beer and display broad biological activities. Chalcone synthase that can use 4-coumaroyl-CoA to produce 4,2',4',6'-tetrahydroxychalcone (also termed naringenin-chalcone or chalcone) which can, under specific conditions, spontaneously isomerize into naringenin. This Humulus lupulus (European hop) protein is Chalcone synthase H2.